Reading from the N-terminus, the 517-residue chain is N-acetylglucosamine-1-phosphodiester alpha-N-acetylglucosaminidase (517 aa).

An N-terminal signal peptide occupies residues Met-1–Ser-25. Positions Leu-26 to Arg-49 are cleaved as a propeptide — removed in mature form. Positions Arg-49–His-75 are disordered. Residues Asp-50–Ala-453 are Lumenal-facing. Cystine bridges form between Cys-116-Cys-149, Cys-133-Cys-324, Cys-308-Cys-315, Cys-363-Cys-374, and Cys-381-Cys-390. N-linked (GlcNAc...) asparagine glycosylation is found at Asn-215 and Asn-297. An EGF-like domain is found at Ser-359 to Ser-391. Residues Asn-367, Asn-389, and Asn-421 are each glycosylated (N-linked (GlcNAc...) asparagine). Residues Leu-454 to Leu-474 form a helical membrane-spanning segment. Residues Gly-475–Asp-517 are Cytoplasmic-facing. The Tyrosine-based internalization motif signature appears at Tyr-488–His-491. Positions Tyr-488–Glu-495 are mediates the interaction with AP4M1. The NPF internalization motif motif lies at Thr-511 to Phe-515.

Homotetramer arranged as two disulfide-linked homodimers. Interacts with AP4M1. The precursor is cleaved and activated in the trans-Golgi network by a furin endopeptidase.

It localises to the golgi apparatus. The protein resides in the golgi stack membrane. Its subcellular location is the trans-Golgi network. It catalyses the reaction N(4)-[6-(N-acetyl-alpha-D-glucosaminyl-1-phospho)-alpha-D-mannosyl-(1-&gt;2)-alpha-D-mannosyl-(glycan)]-L-asparaginyl-[protein] + H2O = N(4)-[6-phospho-alpha-D-mannosyl-(1-&gt;2)-alpha-D-mannosyl-(glycan)]-L-asparaginyl-[protein] + N-acetyl-D-glucosamine + H(+). The protein operates within protein modification; protein glycosylation. Its function is as follows. Catalyzes the second step in the formation of the mannose 6-phosphate targeting signal on lysosomal enzyme oligosaccharides by removing GlcNAc residues from GlcNAc-alpha-P-mannose moieties, which are formed in the first step. Also hydrolyzes UDP-GlcNAc, a sugar donor for Golgi N-acetylglucosaminyltransferases. This is N-acetylglucosamine-1-phosphodiester alpha-N-acetylglucosaminidase (Nagpa) from Mus musculus (Mouse).